The primary structure comprises 81 residues: Photosystem I iron-sulfur center (81 aa).

4Fe-4S ferredoxin-type domains lie at 2–31 (SHTVKIYDTCIGCTQCVRACPTDVLEMVPW) and 39–68 (IASSPRTEDCVGCKRCETACPTDFLSIRVY). Residues Cys11, Cys14, Cys17, Cys21, Cys48, Cys51, Cys54, and Cys58 each contribute to the [4Fe-4S] cluster site.

In terms of assembly, the cyanobacterial PSI reaction center is composed of one copy each of PsaA,B,C,D,E,F,I,J,K,L,M and X, and forms trimeric complexes. It depends on [4Fe-4S] cluster as a cofactor.

It is found in the cellular thylakoid membrane. The enzyme catalyses reduced [plastocyanin] + hnu + oxidized [2Fe-2S]-[ferredoxin] = oxidized [plastocyanin] + reduced [2Fe-2S]-[ferredoxin]. In terms of biological role, apoprotein for the two 4Fe-4S centers FA and FB of photosystem I (PSI); essential for photochemical activity. FB is the terminal electron acceptor of PSI, donating electrons to ferredoxin. The C-terminus interacts with PsaA/B/D and helps assemble the protein into the PSI complex. Required for binding of PsaD and PsaE to PSI. PSI is a plastocyanin/cytochrome c6-ferredoxin oxidoreductase, converting photonic excitation into a charge separation, which transfers an electron from the donor P700 chlorophyll pair to the spectroscopically characterized acceptors A0, A1, FX, FA and FB in turn. This chain is Photosystem I iron-sulfur center, found in Microchaete diplosiphon (Fremyella diplosiphon).